The chain runs to 229 residues: Cytidylate kinase (229 aa).

ATP is bound at residue 12–20; it reads GPSGSGKGT.

The protein belongs to the cytidylate kinase family. Type 1 subfamily.

Its subcellular location is the cytoplasm. It carries out the reaction CMP + ATP = CDP + ADP. The enzyme catalyses dCMP + ATP = dCDP + ADP. This is Cytidylate kinase from Pseudomonas syringae pv. tomato (strain ATCC BAA-871 / DC3000).